Reading from the N-terminus, the 144-residue chain is Peptide methionine sulfoxide reductase MsrB (144 aa).

The span at 1–12 (MDKQQGELRQRL) shows a compositional bias: basic and acidic residues. The interval 1-25 (MDKQQGELRQRLTPEQYAVTQEAAT) is disordered. In terms of domain architecture, MsrB spans 5–128 (QGELRQRLTP…NSAALKFIPV (124 aa)). The Nucleophile role is filled by Cys-117.

This sequence belongs to the MsrB Met sulfoxide reductase family.

It carries out the reaction L-methionyl-[protein] + [thioredoxin]-disulfide + H2O = L-methionyl-(R)-S-oxide-[protein] + [thioredoxin]-dithiol. This Lactiplantibacillus plantarum (strain ATCC BAA-793 / NCIMB 8826 / WCFS1) (Lactobacillus plantarum) protein is Peptide methionine sulfoxide reductase MsrB.